Consider the following 394-residue polypeptide: Zinc finger and SCAN domain-containing protein 9 (394 aa).

K26 participates in a covalent cross-link: Glycyl lysine isopeptide (Lys-Gly) (interchain with G-Cter in SUMO2). An SCAN box domain is found at 52–134; that stretch reads RRHFRQLCYQ…ILLEDLEREL (83 aa). Residues K215 and K238 each participate in a glycyl lysine isopeptide (Lys-Gly) (interchain with G-Cter in SUMO2) cross-link. C2H2-type zinc fingers lie at residues 254–276, 282–304, 310–332, 338–360, and 366–388; these read HKCD…QRIH, YECN…RGIH, YHCK…QRIH, YQCS…QRSH, and HQCI…QKIH.

It belongs to the krueppel C2H2-type zinc-finger protein family.

It is found in the nucleus. Functionally, may be involved in transcriptional regulation. The chain is Zinc finger and SCAN domain-containing protein 9 (ZSCAN9) from Homo sapiens (Human).